Consider the following 286-residue polypeptide: uncharacterized protein (286 aa).

H183 (proton donor) is an active-site residue. The Nucleophile role is filled by C277.

It belongs to the DDAH family.

This is an uncharacterized protein from Bacillus subtilis (strain 168).